Reading from the N-terminus, the 270-residue chain is Myelin protein zero-like protein 1 (270 aa).

The N-terminal stretch at 1 to 35 (MAEAVGAVTLIAAPARRRWLWSALAAMLGLLTARI) is a signal peptide. Residues 36–151 (SALEVHTPKE…DIVVRPGQIR (116 aa)) form the Ig-like V-type domain. Residues 36 to 162 (SALEVHTPKE…HVVEIDNLLV (127 aa)) are Extracellular-facing. N-linked (GlcNAc...) asparagine glycans are attached at residues asparagine 50 and asparagine 130. The cysteines at positions 58 and 135 are disulfide-linked. A helical transmembrane segment spans residues 163-183 (FLVWVVVGTVTAVVLGLTLLI). Residues 184–270 (SLVLVVLYRR…SVVYADIRKD (87 aa)) lie on the Cytoplasmic side of the membrane. The interval 201–257 (TGCSTSERLSPVKQAPRKCPSDTEGLVKSPPSAGSHQGPVIYAQLDHSGGHHSGKIN) is disordered. Serine 204, serine 206, serine 210, and serine 221 each carry phosphoserine. Positions 240 to 245 (VIYAQL) match the ITIM motif 1 motif. Tyrosine 242 is subject to Phosphotyrosine. Residue serine 261 is modified to Phosphoserine. Residues 262–267 (VVYADI) carry the ITIM motif 2 motif. Tyrosine 264 bears the Phosphotyrosine mark.

This sequence belongs to the myelin P0 protein family. Interacts with phosphorylated PTPN11/SHP-2. In terms of processing, phosphorylated on tyrosine residues upon stimulation with pervanadate and concanavalin-A (ConA). Phosphorylation at Tyr-242 and Tyr-264 is required for interaction with PTPN11/SHP-2. Dephosphorylated by PTPN11/SHP-2 (in vitro). N-glycosylated.

It is found in the membrane. Cell surface receptor, which is involved in signal transduction processes. Recruits PTPN11/SHP-2 to the cell membrane and is a putative substrate of PTPN11/SHP-2. Is a major receptor for concanavalin-A (ConA) and is involved in cellular signaling induced by ConA, which probably includes Src family tyrosine-protein kinases. May be involved in regulation of integrin-mediated cell motility. In Rattus norvegicus (Rat), this protein is Myelin protein zero-like protein 1 (Mpzl1).